Reading from the N-terminus, the 302-residue chain is 33 kDa chaperonin (302 aa).

2 disulfide bridges follow: Cys-234–Cys-236 and Cys-267–Cys-270.

It belongs to the HSP33 family. In terms of processing, under oxidizing conditions two disulfide bonds are formed involving the reactive cysteines. Under reducing conditions zinc is bound to the reactive cysteines and the protein is inactive.

Its subcellular location is the cytoplasm. Its function is as follows. Redox regulated molecular chaperone. Protects both thermally unfolding and oxidatively damaged proteins from irreversible aggregation. Plays an important role in the bacterial defense system toward oxidative stress. The sequence is that of 33 kDa chaperonin from Neisseria gonorrhoeae (strain ATCC 700825 / FA 1090).